The chain runs to 410 residues: Arginine deiminase (410 aa).

C400 (amidino-cysteine intermediate) is an active-site residue.

Belongs to the arginine deiminase family.

It localises to the cytoplasm. It carries out the reaction L-arginine + H2O = L-citrulline + NH4(+). Its pathway is amino-acid degradation; L-arginine degradation via ADI pathway; carbamoyl phosphate from L-arginine: step 1/2. In Bacillus thuringiensis subsp. konkukian (strain 97-27), this protein is Arginine deiminase.